The following is a 415-amino-acid chain: Multidrug resistance protein MdtA (415 aa).

A signal peptide spans 1–21 (MKGSYKSRWVIVIVVVIAAIA). Residues 34–47 (SAAPGATKQAQQSP) show a composition bias toward polar residues. 2 disordered regions span residues 34 to 60 (SAAP…GPLA) and 392 to 415 (EAQS…GARS). Basic and acidic residues predominate over residues 399–415 (PEEKATSREYAKKGARS).

It belongs to the membrane fusion protein (MFP) (TC 8.A.1) family. As to quaternary structure, part of a tripartite efflux system composed of MdtA, MdtB and MdtC.

It is found in the cell inner membrane. Functionally, the MdtABC tripartite complex confers resistance against novobiocin and deoxycholate. The sequence is that of Multidrug resistance protein MdtA from Escherichia fergusonii (strain ATCC 35469 / DSM 13698 / CCUG 18766 / IAM 14443 / JCM 21226 / LMG 7866 / NBRC 102419 / NCTC 12128 / CDC 0568-73).